A 152-amino-acid chain; its full sequence is Large ribosomal subunit protein uL15 (152 aa).

The disordered stretch occupies residues 1–57; sequence MTSTLNTLKSNSGSRKKKLRKGRGIAAGQGASCGFGMRGQKSRSGRPTRPGFEGGQM. A compositionally biased stretch (basic residues) spans 14–23; it reads SRKKKLRKGR. Positions 25–37 are enriched in gly residues; it reads IAAGQGASCGFGM.

This sequence belongs to the universal ribosomal protein uL15 family. As to quaternary structure, part of the 50S ribosomal subunit.

Functionally, binds to the 23S rRNA. The protein is Large ribosomal subunit protein uL15 of Prochlorococcus marinus (strain AS9601).